We begin with the raw amino-acid sequence, 454 residues long: Phosphoglucosamine mutase (454 aa).

The Phosphoserine intermediate role is filled by Ser-104. Mg(2+) contacts are provided by Ser-104, Asp-241, Asp-243, and Asp-245. The residue at position 104 (Ser-104) is a Phosphoserine.

Belongs to the phosphohexose mutase family. Requires Mg(2+) as cofactor. Post-translationally, activated by phosphorylation.

The enzyme catalyses alpha-D-glucosamine 1-phosphate = D-glucosamine 6-phosphate. In terms of biological role, catalyzes the conversion of glucosamine-6-phosphate to glucosamine-1-phosphate. The chain is Phosphoglucosamine mutase from Paenarthrobacter aurescens (strain TC1).